Reading from the N-terminus, the 131-residue chain is Small ribosomal subunit protein uS11 (131 aa).

The protein belongs to the universal ribosomal protein uS11 family. In terms of assembly, part of the 30S ribosomal subunit. Interacts with proteins S7 and S18. Binds to IF-3.

Functionally, located on the platform of the 30S subunit, it bridges several disparate RNA helices of the 16S rRNA. Forms part of the Shine-Dalgarno cleft in the 70S ribosome. This is Small ribosomal subunit protein uS11 from Deinococcus geothermalis (strain DSM 11300 / CIP 105573 / AG-3a).